Consider the following 575-residue polypeptide: 2-isopropylmalate synthase (575 aa).

Residues 31 to 305 (PTWLSTDLRD…APGLDFSDIA (275 aa)) enclose the Pyruvate carboxyltransferase domain. Mg(2+) contacts are provided by aspartate 40, histidine 244, histidine 246, and asparagine 280. The segment at 437-575 (PVQASPDFSD…RFAGEEQGKG (139 aa)) is regulatory domain.

It belongs to the alpha-IPM synthase/homocitrate synthase family. LeuA type 2 subfamily. As to quaternary structure, homodimer. Mg(2+) is required as a cofactor.

It localises to the cytoplasm. It carries out the reaction 3-methyl-2-oxobutanoate + acetyl-CoA + H2O = (2S)-2-isopropylmalate + CoA + H(+). It functions in the pathway amino-acid biosynthesis; L-leucine biosynthesis; L-leucine from 3-methyl-2-oxobutanoate: step 1/4. Functionally, catalyzes the condensation of the acetyl group of acetyl-CoA with 3-methyl-2-oxobutanoate (2-ketoisovalerate) to form 3-carboxy-3-hydroxy-4-methylpentanoate (2-isopropylmalate). This is 2-isopropylmalate synthase from Herbaspirillum seropedicae (strain SmR1).